The sequence spans 219 residues: EP300-interacting inhibitor of differentiation 2 (219 aa).

The disordered stretch occupies residues 1 to 71 (MSELPADQGV…PVPEAREGPM (71 aa)). Positions 20–34 (GDVRQAEVGGRRREP) are enriched in basic and acidic residues. Omega-N-methylarginine is present on R75. The disordered stretch occupies residues 95–115 (AEPAEEEGPEGRPRSRPGNGP).

As to quaternary structure, heterodimer with EID2B. Interacts with the C-terminus of EP300. Interacts with HDAC1 and HDAC2. Interacts with SMAD2, SMAD4 and with the MH2 domain of SMAD3.

Its subcellular location is the nucleus. Functionally, interacts with EP300 and acts as a repressor of MYOD-dependent transcription and muscle differentiation. Inhibits EP300 histone acetyltransferase activity. Acts as a repressor of TGFB/SMAD transcriptional responses. May act as a repressor of the TGFB/SMAD3-dependent signaling by selectively blocking formation of TGFB-induced SMAD3-SMAD4 complex. This chain is EP300-interacting inhibitor of differentiation 2, found in Bos taurus (Bovine).